Consider the following 276-residue polypeptide: Large ribosomal subunit protein uL2 (276 aa).

Residues 224-276 (VMNPVDHPHGGGEGKAPIGRKSPMTPWGKPTLGYKTRKKKNKSDKFIIRRRKK) form a disordered region. The span at 258–276 (KTRKKKNKSDKFIIRRRKK) shows a compositional bias: basic residues.

The protein belongs to the universal ribosomal protein uL2 family. As to quaternary structure, part of the 50S ribosomal subunit. Forms a bridge to the 30S subunit in the 70S ribosome.

Its function is as follows. One of the primary rRNA binding proteins. Required for association of the 30S and 50S subunits to form the 70S ribosome, for tRNA binding and peptide bond formation. It has been suggested to have peptidyltransferase activity; this is somewhat controversial. Makes several contacts with the 16S rRNA in the 70S ribosome. The polypeptide is Large ribosomal subunit protein uL2 (Geobacillus kaustophilus (strain HTA426)).